We begin with the raw amino-acid sequence, 1704 residues long: Phospholipid-transporting ATPase ABCA3 (1704 aa).

N-linked (GlcNAc...) asparagine glycosylation is present at Asn14. Residues 22–42 form a helical membrane-spanning segment; the sequence is VLVTVLELFLPLLFSGILIWL. Residues Asn53, Asn124, Asn140, and Asn228 are each glycosylated (N-linked (GlcNAc...) asparagine). The next 6 membrane-spanning stretches (helical) occupy residues 261–283, 307–327, 344–364, 373–393, 405–425, and 447–467; these read YQLP…RAVV, AWFL…TLLF, SLVL…SFMV, IAAA…FFVA, LLSC…IGKF, and FCFG…GLVT. The ABC transporter 1 domain maps to 530–763; sequence IKIKHLSKVF…YGAGYHMTLV (234 aa). 566 to 573 serves as a coordination point for ATP; sequence GHNGAGKT. Asn620 carries N-linked (GlcNAc...) asparagine glycosylation. The next 7 helical transmembrane spans lie at 925–945, 1100–1120, 1144–1164, 1183–1203, 1213–1233, 1245–1265, and 1310–1330; these read MVAA…LAIH, IALN…ILAV, SALL…LVVF, LLLM…SFFF, LTIF…IMRI, LDHV…SNFY, and MAAS…NLLW. A glycan (N-linked (GlcNAc...) asparagine) is linked at Asn1350. The 234-residue stretch at 1381–1614 folds into the ABC transporter 2 domain; it reads LIINELSKVY…FGSGYSLQAK (234 aa). 1416 to 1423 is an ATP binding site; it reads GFNGAGKT.

It belongs to the ABC transporter superfamily. ABCA family. In terms of assembly, homooligomer; disulfide-linked. Post-translationally, N-glycosylated. Localization at intracellular vesicles is accompanied by processing of oligosaccharide from high mannose type to complex type. N-linked glycosylation at Asn-124 and Asn-140 is required for stability and efficient anterograde trafficking and prevents from proteasomal degradation. Proteolytically cleaved by CTSL and to a lower extent by CTSB within multivesicular bodies (MVB) and lamellar bodies (LB) leading to a mature form of 150 kDa. In terms of tissue distribution, highly expressed in the lung and moderately expressed in the kidney, adipose, macrophage, and spleen.

It is found in the endosome. The protein resides in the multivesicular body membrane. The protein localises to the cytoplasmic vesicle membrane. It localises to the late endosome membrane. Its subcellular location is the lysosome membrane. The catalysed reaction is a 1,2-diacyl-sn-glycero-3-phospho-(1'-sn-glycerol)(in) + ATP + H2O = a 1,2-diacyl-sn-glycero-3-phospho-(1'-sn-glycerol)(out) + ADP + phosphate + H(+). It carries out the reaction a 1,2-diacyl-sn-glycero-3-phosphocholine(in) + ATP + H2O = a 1,2-diacyl-sn-glycero-3-phosphocholine(out) + ADP + phosphate + H(+). The enzyme catalyses ATP + H2O + phospholipidSide 1 = ADP + phosphate + phospholipidSide 2.. It catalyses the reaction ATP + H2O + xenobioticSide 1 = ADP + phosphate + xenobioticSide 2.. The catalysed reaction is 1,2-dihexadecanoyl-sn-glycero-3-phosphocholine(in) + ATP + H2O = 1,2-dihexadecanoyl-sn-glycero-3-phosphocholine(out) + ADP + phosphate + H(+). It carries out the reaction cholesterol(in) + ATP + H2O = cholesterol(out) + ADP + phosphate + H(+). Functionally, catalyzes the ATP-dependent transport of phospholipids such as phosphatidylcholine and phosphoglycerol from the cytoplasm into the lumen side of lamellar bodies, in turn participates in the lamellar bodies biogenesis and homeostasis of pulmonary surfactant. Transports preferentially phosphatidylcholine containing short acyl chains. In addition plays a role as an efflux transporter of miltefosine across macrophage membranes and free cholesterol (FC) through intralumenal vesicles by removing FC from the cell as a component of surfactant and protects cells from free cholesterol toxicity. This chain is Phospholipid-transporting ATPase ABCA3 (Abca3), found in Mus musculus (Mouse).